The chain runs to 109 residues: Large ribosomal subunit protein uL22 (109 aa).

It belongs to the universal ribosomal protein uL22 family. As to quaternary structure, part of the 50S ribosomal subunit.

This protein binds specifically to 23S rRNA; its binding is stimulated by other ribosomal proteins, e.g. L4, L17, and L20. It is important during the early stages of 50S assembly. It makes multiple contacts with different domains of the 23S rRNA in the assembled 50S subunit and ribosome. In terms of biological role, the globular domain of the protein is located near the polypeptide exit tunnel on the outside of the subunit, while an extended beta-hairpin is found that lines the wall of the exit tunnel in the center of the 70S ribosome. The polypeptide is Large ribosomal subunit protein uL22 (Cupriavidus necator (strain ATCC 17699 / DSM 428 / KCTC 22496 / NCIMB 10442 / H16 / Stanier 337) (Ralstonia eutropha)).